Here is a 122-residue protein sequence, read N- to C-terminus: Large ribosomal subunit protein bL12 (122 aa).

This sequence belongs to the bacterial ribosomal protein bL12 family. In terms of assembly, homodimer. Part of the ribosomal stalk of the 50S ribosomal subunit. Forms a multimeric L10(L12)X complex, where L10 forms an elongated spine to which 2 to 4 L12 dimers bind in a sequential fashion. Binds GTP-bound translation factors.

Functionally, forms part of the ribosomal stalk which helps the ribosome interact with GTP-bound translation factors. Is thus essential for accurate translation. The protein is Large ribosomal subunit protein bL12 of Neisseria lactamica.